Consider the following 310-residue polypeptide: tRNA-splicing endonuclease subunit Sen34 (310 aa).

The interval 119–177 (GQAAKKQKLEQASGASSSQEAGSSQAAKEDETSDGQASGEQEEAGPSSSQAGPSNGVAP) is disordered. The segment covering 128-144 (EQASGASSSQEAGSSQA) has biased composition (low complexity). Residues Tyr-247, His-255, and Lys-286 contribute to the active site.

The protein belongs to the tRNA-intron endonuclease family. As to quaternary structure, tRNA splicing endonuclease is a heterotetramer composed of TSEN2, TSEN15, TSEN34/LENG5 and TSEN54. tRNA splicing endonuclease complex also contains proteins of the pre-mRNA 3'-end processing machinery such as CLP1, CPSF1, CPSF4 and CSTF2.

Its subcellular location is the nucleus. It localises to the nucleolus. The catalysed reaction is pretRNA = a 3'-half-tRNA molecule with a 5'-OH end + a 5'-half-tRNA molecule with a 2',3'-cyclic phosphate end + an intron with a 2',3'-cyclic phosphate and a 5'-hydroxyl terminus.. In terms of biological role, constitutes one of the two catalytic subunit of the tRNA-splicing endonuclease complex, a complex responsible for identification and cleavage of the splice sites in pre-tRNA. It cleaves pre-tRNA at the 5'- and 3'-splice sites to release the intron. The products are an intron and two tRNA half-molecules bearing 2',3'-cyclic phosphate and 5'-OH termini. There are no conserved sequences at the splice sites, but the intron is invariably located at the same site in the gene, placing the splice sites an invariant distance from the constant structural features of the tRNA body. It probably carries the active site for 3'-splice site cleavage. The tRNA splicing endonuclease is also involved in mRNA processing via its association with pre-mRNA 3'-end processing factors, establishing a link between pre-tRNA splicing and pre-mRNA 3'-end formation, suggesting that the endonuclease subunits function in multiple RNA-processing events. The chain is tRNA-splicing endonuclease subunit Sen34 (TSEN34) from Homo sapiens (Human).